The primary structure comprises 558 residues: Formate--tetrahydrofolate ligase (558 aa).

Position 66–73 (66–73 (TPAGEGKT)) interacts with ATP.

This sequence belongs to the formate--tetrahydrofolate ligase family.

It carries out the reaction (6S)-5,6,7,8-tetrahydrofolate + formate + ATP = (6R)-10-formyltetrahydrofolate + ADP + phosphate. Its pathway is one-carbon metabolism; tetrahydrofolate interconversion. This chain is Formate--tetrahydrofolate ligase, found in Neisseria gonorrhoeae (strain ATCC 700825 / FA 1090).